A 2080-amino-acid chain; its full sequence is Fatty acid synthase beta subunit TOXC (2080 aa).

The 228-residue stretch at 170-397 folds into the Starter acyltransferase (SAT) domain; sequence GRYFDELREL…LYRFNLLLRK (228 aa). Serine 276 functions as the For acetyltransferase activity in the catalytic mechanism. The segment at 585-830 is enoyl reductase (ER) domain; that stretch reads SRLLGLPPIM…VIVETEGLND (246 aa). The tract at residues 1155 to 1644 is dehydratase (DH) domain; the sequence is GKSRSWRHAI…LPNQKLEVKL (490 aa). The MaoC-like domain occupies 1544–1662; the sequence is SVDFEDPVSV…MIRLHIEARA (119 aa). A Malonyl-CoA:ACP transacylase (MAT) domain is found at 1682-2046; that stretch reads TYVFTGQGSQ…FQYVYDLTGS (365 aa). The tract at residues 1683 to 2046 is malonyl/palmitoyl transferase (MT/PT) domain; it reads YVFTGQGSQE…FQYVYDLTGS (364 aa). The For malonyltransferase activity role is filled by serine 1828.

Belongs to the fungal fatty acid synthetase subunit beta family.

The catalysed reaction is acetyl-CoA + n malonyl-CoA + 2n NADPH + 4n H(+) = a long-chain-acyl-CoA + n CoA + n CO2 + 2n NADP(+).. The enzyme catalyses holo-[ACP] + acetyl-CoA = acetyl-[ACP] + CoA. It catalyses the reaction holo-[ACP] + malonyl-CoA = malonyl-[ACP] + CoA. It carries out the reaction a (3R)-hydroxyacyl-[ACP] = a (2E)-enoyl-[ACP] + H2O. The catalysed reaction is a 2,3-saturated acyl-[ACP] + NAD(+) = a (2E)-enoyl-[ACP] + NADH + H(+). The enzyme catalyses (9Z)-octadecenoyl-[ACP] + H2O = (9Z)-octadecenoate + holo-[ACP] + H(+). It participates in mycotoxin biosynthesis; HC-toxin biosynthesis. Fatty acid synthase beta subunit, part of the diffuse TOX2 gene cluster that mediates the biosynthesis of the HC-toxin, cyclic tetrapeptide of structure cyclo(D-Pro-L-Ala-D-Ala-L-Aeo), where Aeo stands for 2-amino-9,10-epoxi-8-oxodecanoic acid. HC-toxin is a determinant of specificity and virulence in the interaction between the producing fungus and its host, maize. TOXC contribute to the synthesis of the decanoic backbone of 2-amino-9,10-epoxi-8-oxodecanoic acid, an essential precursor for the production of the major forms of HC-toxin by the non-ribosomal peptide synthetase HTS1. This is Fatty acid synthase beta subunit TOXC from Cochliobolus carbonum (Maize leaf spot fungus).